The following is a 576-amino-acid chain: SNF1-like protein kinase ssp2 (576 aa).

In terms of domain architecture, Protein kinase spans 34 to 285 (YIIRETLGEG…IQEIRRDPWF (252 aa)). Residues 40–48 (LGEGSFGKV) and lysine 63 contribute to the ATP site. The active-site Proton acceptor is aspartate 156. A Phosphothreonine modification is found at threonine 189. Residues 292–348 (YLRPMEEVQGSYADSRIVSKLGEAMGFSEDYIVEALRSDENNEVKEAYNLLHENQVI) form an auto-inhibitory domain (AID) region. Residues 304–345 (ADSRIVSKLGEAMGFSEDYIVEALRSDENNEVKEAYNLLHEN) form the UBA domain. Serine 442 bears the Phosphoserine mark.

It belongs to the protein kinase superfamily. CAMK Ser/Thr protein kinase family. SNF1 subfamily. Component of the AMP-activated protein kinase complex also known as the SNF1 kinase complex (Snf1c), a heterotrimeric complex composed of a catalytic subunit alpha and 2 regulatory subunits beta (amk2) and gamma (cbs2). In terms of processing, phosphorylation at Thr-189 by ssp1 is required for nuclear entry in nutritionally stressed cells.

It localises to the cytoplasm. Its subcellular location is the nucleus. The enzyme catalyses L-seryl-[protein] + ATP = O-phospho-L-seryl-[protein] + ADP + H(+). The catalysed reaction is L-threonyl-[protein] + ATP = O-phospho-L-threonyl-[protein] + ADP + H(+). Serine/threonine protein kinase essential for release from glucose repression via the phosphorylation of scr1 upon glucose deprivation. Catalytic subunit of the AMP-activated protein kinase complex also known as the SNF1 kinase complex (Snf1c), a central regulator of cellular energy homeostasis, which, in response to a fall in intracellular ATP levels, activates energy-producing pathways and inhibits energy-consuming processes. The complex phosphorylates histone H3 to form H3S10ph, which promotes H3K14ac formation, leading to transcriptional activation through TBP recruitment to the promoters. Regulates proper cell cycle exit and sexual differentiation. Also regulates ste11 levels under nitrogen deprivation. The protein is SNF1-like protein kinase ssp2 of Schizosaccharomyces pombe (strain 972 / ATCC 24843) (Fission yeast).